The chain runs to 301 residues: UDP-N-acetylenolpyruvoylglucosamine reductase (301 aa).

The FAD-binding PCMH-type domain occupies 30-194 (VGGEPDYLVF…LSAKFALAPG (165 aa)). Arginine 173 is an active-site residue. Serine 223 (proton donor) is an active-site residue. Glutamate 293 is an active-site residue.

This sequence belongs to the MurB family. It depends on FAD as a cofactor.

Its subcellular location is the cytoplasm. The catalysed reaction is UDP-N-acetyl-alpha-D-muramate + NADP(+) = UDP-N-acetyl-3-O-(1-carboxyvinyl)-alpha-D-glucosamine + NADPH + H(+). The protein operates within cell wall biogenesis; peptidoglycan biosynthesis. Its function is as follows. Cell wall formation. This Streptococcus pneumoniae (strain CGSP14) protein is UDP-N-acetylenolpyruvoylglucosamine reductase.